We begin with the raw amino-acid sequence, 80 residues long: Phosphoribosylformylglycinamidine synthase subunit PurS (80 aa).

It belongs to the PurS family. As to quaternary structure, homodimer. Part of the FGAM synthase complex composed of 1 PurL, 1 PurQ and 2 PurS subunits.

It localises to the cytoplasm. The enzyme catalyses N(2)-formyl-N(1)-(5-phospho-beta-D-ribosyl)glycinamide + L-glutamine + ATP + H2O = 2-formamido-N(1)-(5-O-phospho-beta-D-ribosyl)acetamidine + L-glutamate + ADP + phosphate + H(+). The protein operates within purine metabolism; IMP biosynthesis via de novo pathway; 5-amino-1-(5-phospho-D-ribosyl)imidazole from N(2)-formyl-N(1)-(5-phospho-D-ribosyl)glycinamide: step 1/2. In terms of biological role, part of the phosphoribosylformylglycinamidine synthase complex involved in the purines biosynthetic pathway. Catalyzes the ATP-dependent conversion of formylglycinamide ribonucleotide (FGAR) and glutamine to yield formylglycinamidine ribonucleotide (FGAM) and glutamate. The FGAM synthase complex is composed of three subunits. PurQ produces an ammonia molecule by converting glutamine to glutamate. PurL transfers the ammonia molecule to FGAR to form FGAM in an ATP-dependent manner. PurS interacts with PurQ and PurL and is thought to assist in the transfer of the ammonia molecule from PurQ to PurL. The chain is Phosphoribosylformylglycinamidine synthase subunit PurS from Archaeoglobus fulgidus (strain ATCC 49558 / DSM 4304 / JCM 9628 / NBRC 100126 / VC-16).